We begin with the raw amino-acid sequence, 244 residues long: ATP synthase subunit a (244 aa).

The next 6 helical transmembrane spans lie at 25–45, 85–105, 115–135, 144–164, 193–213, and 216–236; these read ISFT…LLIF, YFAF…FGMI, IIVT…IGFM, LFVP…IEII, GFVI…SVAL, and LEIL…CIYL.

It belongs to the ATPase A chain family. F-type ATPases have 2 components, CF(1) - the catalytic core - and CF(0) - the membrane proton channel. CF(1) has five subunits: alpha(3), beta(3), gamma(1), delta(1), epsilon(1). CF(0) has three main subunits: a(1), b(2) and c(9-12). The alpha and beta chains form an alternating ring which encloses part of the gamma chain. CF(1) is attached to CF(0) by a central stalk formed by the gamma and epsilon chains, while a peripheral stalk is formed by the delta and b chains.

It localises to the cell inner membrane. Its function is as follows. Key component of the proton channel; it plays a direct role in the translocation of protons across the membrane. The polypeptide is ATP synthase subunit a (Pelagibacter ubique (strain HTCC1062)).